The sequence spans 494 residues: UPF0371 protein SPT_0390 (494 aa).

The protein belongs to the UPF0371 family.

The sequence is that of UPF0371 protein SPT_0390 from Streptococcus pneumoniae (strain Taiwan19F-14).